We begin with the raw amino-acid sequence, 930 residues long: Isoleucine--tRNA ligase (930 aa).

The short motif at 57-67 is the 'HIGH' region element; that stretch reads PYANGHLHIGH. E573 lines the L-isoleucyl-5'-AMP pocket. The 'KMSKS' region signature appears at 614-618; sequence KMSKS. Residue K617 participates in ATP binding. Zn(2+)-binding residues include C902, C905, C918, and C921.

The protein belongs to the class-I aminoacyl-tRNA synthetase family. IleS type 1 subfamily. Monomer. The cofactor is Zn(2+).

The protein resides in the cytoplasm. The enzyme catalyses tRNA(Ile) + L-isoleucine + ATP = L-isoleucyl-tRNA(Ile) + AMP + diphosphate. Its function is as follows. Catalyzes the attachment of isoleucine to tRNA(Ile). As IleRS can inadvertently accommodate and process structurally similar amino acids such as valine, to avoid such errors it has two additional distinct tRNA(Ile)-dependent editing activities. One activity is designated as 'pretransfer' editing and involves the hydrolysis of activated Val-AMP. The other activity is designated 'posttransfer' editing and involves deacylation of mischarged Val-tRNA(Ile). This is Isoleucine--tRNA ligase from Helicobacter hepaticus (strain ATCC 51449 / 3B1).